A 351-amino-acid polypeptide reads, in one-letter code: Quinolinate phosphoribosyltransferase [decarboxylating] 2b, mitochondrial (351 aa).

Residues R142, 173-175 (TRK), R197, K207, E240, D267, 299-301 (SGN), and 320-322 (SGA) each bind substrate.

Belongs to the NadC/ModD family. As to expression, expressed in roots and flowers.

Its subcellular location is the mitochondrion. The catalysed reaction is nicotinate beta-D-ribonucleotide + CO2 + diphosphate = quinolinate + 5-phospho-alpha-D-ribose 1-diphosphate + 2 H(+). It functions in the pathway alkaloid biosynthesis; nicotine biosynthesis. It participates in cofactor biosynthesis; NAD(+) biosynthesis; nicotinate D-ribonucleotide from quinolinate: step 1/1. Its function is as follows. Involved in the biosynthesis of pyridine alkaloid natural products, leading mainly to the production of anabasine, anatabine, nicotine and nornicotine, effective deterrents against herbivores with antiparasitic and pesticide properties (neurotoxins); nornicotine serves as the precursor in the synthesis of the carcinogen compound N'-nitrosonornicotine (NNN). Involved in the catabolism of quinolinic acid (QA). The polypeptide is Quinolinate phosphoribosyltransferase [decarboxylating] 2b, mitochondrial (Nicotiana tabacum (Common tobacco)).